We begin with the raw amino-acid sequence, 79 residues long: Cytochrome c-551 (79 aa).

The span at 1-14 (DGQSIYESGTSPTC) shows a compositional bias: polar residues. Residues 1 to 35 (DGQSIYESGTSPTCASCHDRGTAGAPKINEPGDWD) are disordered. Residues Cys-14, Cys-17, His-18, and Met-55 each contribute to the heme c site.

In terms of processing, binds 1 heme c group covalently per subunit.

The polypeptide is Cytochrome c-551 (Halorhodospira halochloris (Ectothiorhodospira halochloris)).